We begin with the raw amino-acid sequence, 474 residues long: ATP synthase subunit beta (474 aa).

153-160 (GGAGVGKT) serves as a coordination point for ATP.

The protein belongs to the ATPase alpha/beta chains family. As to quaternary structure, F-type ATPases have 2 components, CF(1) - the catalytic core - and CF(0) - the membrane proton channel. CF(1) has five subunits: alpha(3), beta(3), gamma(1), delta(1), epsilon(1). CF(0) has three main subunits: a(1), b(2) and c(9-12). The alpha and beta chains form an alternating ring which encloses part of the gamma chain. CF(1) is attached to CF(0) by a central stalk formed by the gamma and epsilon chains, while a peripheral stalk is formed by the delta and b chains.

It is found in the cell inner membrane. It catalyses the reaction ATP + H2O + 4 H(+)(in) = ADP + phosphate + 5 H(+)(out). Its function is as follows. Produces ATP from ADP in the presence of a proton gradient across the membrane. The catalytic sites are hosted primarily by the beta subunits. In Rickettsia prowazekii (strain Madrid E), this protein is ATP synthase subunit beta.